Reading from the N-terminus, the 487-residue chain is Serine carboxypeptidase-like 38 (487 aa).

The signal sequence occupies residues 1-20; sequence MGKQQDWSVTACIFLSLSLA. Disulfide bonds link C119–C368, C280–C290, and C315–C336. Residue S215 is part of the active site. N-linked (GlcNAc...) asparagine glycosylation is present at N233. Residues N317 and N357 are each glycosylated (N-linked (GlcNAc...) asparagine). D407 is a catalytic residue. N-linked (GlcNAc...) asparagine glycosylation is found at N423 and N449. H460 is a catalytic residue.

Belongs to the peptidase S10 family. As to expression, expressed in seedlings, roots, leaves, flowers and siliques.

The protein localises to the secreted. Its function is as follows. Probable carboxypeptidase. The protein is Serine carboxypeptidase-like 38 (SCPL38) of Arabidopsis thaliana (Mouse-ear cress).